Reading from the N-terminus, the 377-residue chain is Peroxisomal membrane protein PEX14 (377 aa).

Residues 1–15 (MASSEQAEQPSQPSS) are compositionally biased toward low complexity. Positions 1–24 (MASSEQAEQPSQPSSTPGSENVLP) are disordered. Residue Ala2 is modified to N-acetylalanine. Over 2-108 (ASSEQAEQPS…YSPAGSRWRD (107 aa)) the chain is Peroxisomal matrix. Lys34 is modified (N6-acetyllysine). Residues 109-126 (YGALAIIMAGIAFGFHQL) traverse the membrane as a helical segment. Residues 127 to 377 (YKKYLLPLIL…EGASNESERD (251 aa)) lie on the Cytoplasmic side of the membrane. Positions 230 to 377 (PPSPSAPKIP…EGASNESERD (148 aa)) are disordered. A Phosphoserine modification is found at Ser232. Low complexity-rich tracts occupy residues 244 to 259 (PVKS…VNHH) and 265 to 275 (SPVSNESTSSS). Residues Ser282 and Ser335 each carry the phosphoserine modification. A compositionally biased stretch (acidic residues) spans 323–342 (KEDEEDEEDDDVSHVDEEDC). Residues 360-377 (QVEKLRRPEGASNESERD) show a composition bias toward basic and acidic residues.

The protein belongs to the peroxin-14 family. As to quaternary structure, interacts with PEX13; forming the PEX13-PEX14 docking complex. Interacts with PEX5 (via WxxxF/Y motifs). Interacts with PEX19. Interacts with tubulin.

The protein resides in the peroxisome membrane. Functionally, component of the PEX13-PEX14 docking complex, a translocon channel that specifically mediates the import of peroxisomal cargo proteins bound to PEX5 receptor. The PEX13-PEX14 docking complex forms a large import pore which can be opened to a diameter of about 9 nm. Mechanistically, PEX5 receptor along with cargo proteins associates with the PEX14 subunit of the PEX13-PEX14 docking complex in the cytosol, leading to the insertion of the receptor into the organelle membrane with the concomitant translocation of the cargo into the peroxisome matrix. Plays a key role for peroxisome movement through a direct interaction with tubulin. This is Peroxisomal membrane protein PEX14 from Homo sapiens (Human).